The chain runs to 320 residues: Cytochrome f (320 aa).

The N-terminal stretch at 1–35 (MQTRNTLSWIKEEITRSISVSLMIYIITWASISNA) is a signal peptide. Heme-binding residues include tyrosine 36, cysteine 56, cysteine 59, and histidine 60. A helical transmembrane segment spans residues 286–306 (VQGLLFFLASVVLAQIFLVLK).

It belongs to the cytochrome f family. In terms of assembly, the 4 large subunits of the cytochrome b6-f complex are cytochrome b6, subunit IV (17 kDa polypeptide, petD), cytochrome f and the Rieske protein, while the 4 small subunits are PetG, PetL, PetM and PetN. The complex functions as a dimer. Requires heme as cofactor.

The protein resides in the plastid. The protein localises to the chloroplast thylakoid membrane. Component of the cytochrome b6-f complex, which mediates electron transfer between photosystem II (PSII) and photosystem I (PSI), cyclic electron flow around PSI, and state transitions. In Carica papaya (Papaya), this protein is Cytochrome f.